A 25-amino-acid chain; its full sequence is Germin-like protein (25 aa).

The protein belongs to the germin family. As to quaternary structure, oligomer (believed to be a pentamer but probably hexamer). Post-translationally, the three different mass spectrometry results appear to arise from different glycosylation variants.

The protein resides in the secreted. Its subcellular location is the extracellular space. It localises to the apoplast. May play a role in plant defense. Probably has no oxalate oxidase activity even if the active site is conserved. The polypeptide is Germin-like protein (Citrus sinensis (Sweet orange)).